The sequence spans 243 residues: Leucyl/phenylalanyl-tRNA--protein transferase (243 aa).

This sequence belongs to the L/F-transferase family.

The protein localises to the cytoplasm. The catalysed reaction is N-terminal L-lysyl-[protein] + L-leucyl-tRNA(Leu) = N-terminal L-leucyl-L-lysyl-[protein] + tRNA(Leu) + H(+). It carries out the reaction N-terminal L-arginyl-[protein] + L-leucyl-tRNA(Leu) = N-terminal L-leucyl-L-arginyl-[protein] + tRNA(Leu) + H(+). It catalyses the reaction L-phenylalanyl-tRNA(Phe) + an N-terminal L-alpha-aminoacyl-[protein] = an N-terminal L-phenylalanyl-L-alpha-aminoacyl-[protein] + tRNA(Phe). Functions in the N-end rule pathway of protein degradation where it conjugates Leu, Phe and, less efficiently, Met from aminoacyl-tRNAs to the N-termini of proteins containing an N-terminal arginine or lysine. The sequence is that of Leucyl/phenylalanyl-tRNA--protein transferase from Saccharophagus degradans (strain 2-40 / ATCC 43961 / DSM 17024).